A 1058-amino-acid polypeptide reads, in one-letter code: Carbamoyl phosphate synthase large chain (1058 aa).

The carboxyphosphate synthetic domain stretch occupies residues 1–401; sequence MSKRKDIQKI…SLLKACRSLE (401 aa). Arginine 129, arginine 169, glycine 175, glycine 176, arginine 208, isoleucine 210, glutamate 215, glycine 241, isoleucine 242, histidine 243, glutamine 284, and glutamate 298 together coordinate ATP. Residues 133 to 327 enclose the ATP-grasp 1 domain; the sequence is KQLMQELDQP…IAKLAAKIAV (195 aa). Mg(2+) contacts are provided by glutamine 284, glutamate 298, and asparagine 300. Positions 284, 298, and 300 each coordinate Mn(2+). The interval 402 to 546 is oligomerization domain; it reads IGVCHNEMTS…YSTYELENES (145 aa). The segment at 547–929 is carbamoyl phosphate synthetic domain; sequence VQSNKESILV…ALYKAFEANN (383 aa). The ATP-grasp 2 domain maps to 671–861; the sequence is EKALKELGIP…MAQIATKLIL (191 aa). Arginine 707, serine 746, isoleucine 748, glutamate 752, glycine 777, valine 778, histidine 779, serine 780, glutamine 820, and glutamate 832 together coordinate ATP. Glutamine 820, glutamate 832, and asparagine 834 together coordinate Mg(2+). Mn(2+) contacts are provided by glutamine 820, glutamate 832, and asparagine 834. Residues 930 to 1058 form the MGS-like domain; it reads SHLSEFGQIV…ESRCFNIEAI (129 aa). The tract at residues 930–1058 is allosteric domain; the sequence is SHLSEFGQIV…ESRCFNIEAI (129 aa).

It belongs to the CarB family. In terms of assembly, composed of two chains; the small (or glutamine) chain promotes the hydrolysis of glutamine to ammonia, which is used by the large (or ammonia) chain to synthesize carbamoyl phosphate. Tetramer of heterodimers (alpha,beta)4. Requires Mg(2+) as cofactor. It depends on Mn(2+) as a cofactor.

It carries out the reaction hydrogencarbonate + L-glutamine + 2 ATP + H2O = carbamoyl phosphate + L-glutamate + 2 ADP + phosphate + 2 H(+). The enzyme catalyses hydrogencarbonate + NH4(+) + 2 ATP = carbamoyl phosphate + 2 ADP + phosphate + 2 H(+). Its pathway is amino-acid biosynthesis; L-arginine biosynthesis; carbamoyl phosphate from bicarbonate: step 1/1. It participates in pyrimidine metabolism; UMP biosynthesis via de novo pathway; (S)-dihydroorotate from bicarbonate: step 1/3. In terms of biological role, large subunit of the glutamine-dependent carbamoyl phosphate synthetase (CPSase). CPSase catalyzes the formation of carbamoyl phosphate from the ammonia moiety of glutamine, carbonate, and phosphate donated by ATP, constituting the first step of 2 biosynthetic pathways, one leading to arginine and/or urea and the other to pyrimidine nucleotides. The large subunit (synthetase) binds the substrates ammonia (free or transferred from glutamine from the small subunit), hydrogencarbonate and ATP and carries out an ATP-coupled ligase reaction, activating hydrogencarbonate by forming carboxy phosphate which reacts with ammonia to form carbamoyl phosphate. The protein is Carbamoyl phosphate synthase large chain of Streptococcus pyogenes serotype M5 (strain Manfredo).